We begin with the raw amino-acid sequence, 146 residues long: Hemoglobin subunit beta (146 aa).

V1 carries the post-translational modification N-acetylvaline. The region spanning 2–146 (HLSGEEKACV…VANALAHKYH (145 aa)) is the Globin domain. Residue T12 is modified to Phosphothreonine. S44 carries the phosphoserine modification. K59 bears the N6-acetyllysine mark. H63 provides a ligand contact to heme b. K82 is subject to N6-acetyllysine. A heme b-binding site is contributed by H92. The residue at position 93 (C93) is an S-nitrosocysteine. K144 bears the N6-acetyllysine mark.

It belongs to the globin family. Heterotetramer of two alpha chains and two beta chains. As to expression, red blood cells.

Involved in oxygen transport from the lung to the various peripheral tissues. The protein is Hemoglobin subunit beta (HBB) of Suncus murinus (Asian house shrew).